The following is a 351-amino-acid chain: UDP-3-O-acylglucosamine N-acyltransferase (351 aa).

His240 serves as the catalytic Proton acceptor.

This sequence belongs to the transferase hexapeptide repeat family. LpxD subfamily. As to quaternary structure, homotrimer.

It catalyses the reaction a UDP-3-O-[(3R)-3-hydroxyacyl]-alpha-D-glucosamine + a (3R)-hydroxyacyl-[ACP] = a UDP-2-N,3-O-bis[(3R)-3-hydroxyacyl]-alpha-D-glucosamine + holo-[ACP] + H(+). It participates in bacterial outer membrane biogenesis; LPS lipid A biosynthesis. Its function is as follows. Catalyzes the N-acylation of UDP-3-O-acylglucosamine using 3-hydroxyacyl-ACP as the acyl donor. Is involved in the biosynthesis of lipid A, a phosphorylated glycolipid that anchors the lipopolysaccharide to the outer membrane of the cell. This chain is UDP-3-O-acylglucosamine N-acyltransferase, found in Pseudomonas syringae pv. syringae (strain B728a).